The following is a 273-amino-acid chain: 5-deoxy-glucuronate isomerase (273 aa).

It belongs to the isomerase IolB family.

The catalysed reaction is 5-deoxy-D-glucuronate = 5-dehydro-2-deoxy-D-gluconate. It participates in polyol metabolism; myo-inositol degradation into acetyl-CoA; acetyl-CoA from myo-inositol: step 4/7. Functionally, involved in the isomerization of 5-deoxy-glucuronate (5DG) to 5-dehydro-2-deoxy-D-gluconate (DKG or 2-deoxy-5-keto-D-gluconate). The protein is 5-deoxy-glucuronate isomerase of Listeria innocua serovar 6a (strain ATCC BAA-680 / CLIP 11262).